A 426-amino-acid polypeptide reads, in one-letter code: DNA polymerase processivity factor component OPG148 (426 aa).

This sequence belongs to the orthopoxvirus OPG148 family. Interacts with the DNA polymerase catalytic subunit OPG071. Interacts with UDG/OPG116. Component of the uracil-DNA glycosylase(UDG)-OPG148-polymerase complex; OPG148 and UDG form a heterodimeric processivity factor that associates with OPG071 to form the processive polymerase holoenzyme. Interacts with OPG117.

Functionally, plays an essential role in viral DNA replication by acting as the polymerase processivity factor together with protein OPG116. Serves as a bridge which links the DNA polymerase OPG071 and the uracil DNA glycosylase. In Vaccinia virus (strain Copenhagen) (VACV), this protein is DNA polymerase processivity factor component OPG148 (OPG148).